Consider the following 505-residue polypeptide: Pentatricopeptide repeat-containing protein At2g17033 (505 aa).

PPR repeat units follow at residues 243–277 (KTQA…KIKP), 278–312 (GLFE…GHKI), and 313–347 (DTVC…NVPF). A Smr domain is found at 413–503 (LDLHGMHLSS…AKGKTVKEWL (91 aa)).

Belongs to the PPR family. P subfamily.

The sequence is that of Pentatricopeptide repeat-containing protein At2g17033 from Arabidopsis thaliana (Mouse-ear cress).